The sequence spans 71 residues: DNA-directed RNA polymerase subunit epsilon (71 aa).

Belongs to the RNA polymerase subunit epsilon family. As to quaternary structure, RNAP is composed of a core of 2 alpha, a beta and a beta' subunit. The core is associated with a delta subunit, and at least one of epsilon or omega. When a sigma factor is associated with the core the holoenzyme is formed, which can initiate transcription.

The catalysed reaction is RNA(n) + a ribonucleoside 5'-triphosphate = RNA(n+1) + diphosphate. In terms of biological role, a non-essential component of RNA polymerase (RNAP). In Geobacillus thermodenitrificans (strain NG80-2), this protein is DNA-directed RNA polymerase subunit epsilon.